Consider the following 384-residue polypeptide: NAD(P) transhydrogenase subunit alpha part 1 (384 aa).

The RQD loop; involved in interaction with PntB stretch occupies residues 126–136; the sequence is PRISRAQSMDI. NAD(+) contacts are provided by residues 127 to 129, 132 to 135, 180 to 182, 202 to 204, Gly-234, Gln-247, and Leu-266; these read RIS, QSMD, VGV, and DVR.

It belongs to the AlaDH/PNT family. As to quaternary structure, heterotrimer of two alpha chains and a beta (PntB) chain; in Rhodospirillum, the alpha chain is made of two subunits (PntAA and PntAB) and forms a dimer.

It catalyses the reaction NAD(+) + NADPH + H(+)(in) = NADH + NADP(+) + H(+)(out). In terms of biological role, the transhydrogenation between NADH and NADP is coupled to respiration and ATP hydrolysis and functions as a proton pump across the membrane. The polypeptide is NAD(P) transhydrogenase subunit alpha part 1 (pntAA) (Rhodospirillum rubrum (strain ATCC 11170 / ATH 1.1.1 / DSM 467 / LMG 4362 / NCIMB 8255 / S1)).